The chain runs to 310 residues: N-acetylmuramic acid 6-phosphate etherase (310 aa).

Residues 64–227 (ITSRLKSNGR…STSVMIKLGK (164 aa)) enclose the SIS domain. E92 serves as the catalytic Proton donor. The active site involves E123.

Belongs to the GCKR-like family. MurNAc-6-P etherase subfamily. In terms of assembly, homodimer.

The enzyme catalyses N-acetyl-D-muramate 6-phosphate + H2O = N-acetyl-D-glucosamine 6-phosphate + (R)-lactate. Its pathway is amino-sugar metabolism; N-acetylmuramate degradation. In terms of biological role, specifically catalyzes the cleavage of the D-lactyl ether substituent of MurNAc 6-phosphate, producing GlcNAc 6-phosphate and D-lactate. The polypeptide is N-acetylmuramic acid 6-phosphate etherase (Prochlorococcus marinus (strain NATL2A)).